A 334-amino-acid chain; its full sequence is Glycerol-1-phosphate dehydrogenase [NAD(P)+] (334 aa).

Residues 77–81 (GRPID) and 99–102 (TTAS) contribute to the NAD(+) site. A substrate-binding site is contributed by Asp104. An NAD(+)-binding site is contributed by Ser108. Residue Asp147 coordinates substrate. Residues Asp147 and His225 each contribute to the Zn(2+) site. Residue His229 participates in substrate binding. His246 contacts Zn(2+).

Belongs to the glycerol-1-phosphate dehydrogenase family. It depends on Zn(2+) as a cofactor.

The protein resides in the cytoplasm. It carries out the reaction sn-glycerol 1-phosphate + NAD(+) = dihydroxyacetone phosphate + NADH + H(+). It catalyses the reaction sn-glycerol 1-phosphate + NADP(+) = dihydroxyacetone phosphate + NADPH + H(+). It participates in membrane lipid metabolism; glycerophospholipid metabolism. In terms of biological role, catalyzes the NAD(P)H-dependent reduction of dihydroxyacetonephosphate (DHAP or glycerone phosphate) to glycerol 1-phosphate (G1P). The G1P thus generated is used as the glycerophosphate backbone of phospholipids in the cellular membranes of Archaea. The chain is Glycerol-1-phosphate dehydrogenase [NAD(P)+] from Methanococcus maripaludis (strain C7 / ATCC BAA-1331).